The following is a 43-amino-acid chain: uncharacterized protein (43 aa).

A disordered region spans residues 13-43 (QLPRLSRPRQSHLPAQTPQPRLSYPKTRRQI).

This is an uncharacterized protein from Clover yellow mosaic virus (CYMV).